Reading from the N-terminus, the 344-residue chain is 2,3,4,5-tetrahydropyridine-2,6-dicarboxylate N-succinyltransferase (344 aa).

E205 contacts Mg(2+). E221 functions as the Acyl-anhydride intermediate in the catalytic mechanism. Succinyl-CoA-binding positions include R223, G238, S241, A264, 279–280 (EA), G287, K304, and 317–320 (RRNS).

The protein belongs to the type 2 tetrahydrodipicolinate N-succinyltransferase family. In terms of assembly, homotrimer.

It localises to the cytoplasm. It carries out the reaction (S)-2,3,4,5-tetrahydrodipicolinate + succinyl-CoA + H2O = (S)-2-succinylamino-6-oxoheptanedioate + CoA. It participates in amino-acid biosynthesis; L-lysine biosynthesis via DAP pathway; LL-2,6-diaminopimelate from (S)-tetrahydrodipicolinate (succinylase route): step 1/3. Functionally, catalyzes the conversion of the cyclic tetrahydrodipicolinate (THDP) into the acyclic N-succinyl-L-2-amino-6-oxopimelate using succinyl-CoA. This is 2,3,4,5-tetrahydropyridine-2,6-dicarboxylate N-succinyltransferase from Pseudomonas putida (strain ATCC 47054 / DSM 6125 / CFBP 8728 / NCIMB 11950 / KT2440).